Reading from the N-terminus, the 107-residue chain is Large ribosomal subunit protein uL24 (107 aa).

This sequence belongs to the universal ribosomal protein uL24 family. In terms of assembly, part of the 50S ribosomal subunit.

In terms of biological role, one of two assembly initiator proteins, it binds directly to the 5'-end of the 23S rRNA, where it nucleates assembly of the 50S subunit. Functionally, one of the proteins that surrounds the polypeptide exit tunnel on the outside of the subunit. This Carboxydothermus hydrogenoformans (strain ATCC BAA-161 / DSM 6008 / Z-2901) protein is Large ribosomal subunit protein uL24.